We begin with the raw amino-acid sequence, 339 residues long: Ketol-acid reductoisomerase (NADP(+)) (339 aa).

A KARI N-terminal Rossmann domain is found at 1-182 (MRVYYDRDAD…GGGRSGIIET (182 aa)). NADP(+)-binding positions include 24–27 (YGSQ), lysine 48, serine 51, threonine 53, and 83–86 (DELQ). Histidine 108 is a catalytic residue. Residue glycine 134 participates in NADP(+) binding. The region spanning 183-328 (NFKEECETDL…AKLRGMMPWI (146 aa)) is the KARI C-terminal knotted domain. Residues aspartate 191, glutamate 195, glutamate 227, and glutamate 231 each contribute to the Mg(2+) site. Serine 252 is a substrate binding site.

This sequence belongs to the ketol-acid reductoisomerase family. Mg(2+) serves as cofactor.

It carries out the reaction (2R)-2,3-dihydroxy-3-methylbutanoate + NADP(+) = (2S)-2-acetolactate + NADPH + H(+). The enzyme catalyses (2R,3R)-2,3-dihydroxy-3-methylpentanoate + NADP(+) = (S)-2-ethyl-2-hydroxy-3-oxobutanoate + NADPH + H(+). Its pathway is amino-acid biosynthesis; L-isoleucine biosynthesis; L-isoleucine from 2-oxobutanoate: step 2/4. It functions in the pathway amino-acid biosynthesis; L-valine biosynthesis; L-valine from pyruvate: step 2/4. Involved in the biosynthesis of branched-chain amino acids (BCAA). Catalyzes an alkyl-migration followed by a ketol-acid reduction of (S)-2-acetolactate (S2AL) to yield (R)-2,3-dihydroxy-isovalerate. In the isomerase reaction, S2AL is rearranged via a Mg-dependent methyl migration to produce 3-hydroxy-3-methyl-2-ketobutyrate (HMKB). In the reductase reaction, this 2-ketoacid undergoes a metal-dependent reduction by NADPH to yield (R)-2,3-dihydroxy-isovalerate. This Sinorhizobium fredii (strain NBRC 101917 / NGR234) protein is Ketol-acid reductoisomerase (NADP(+)).